We begin with the raw amino-acid sequence, 631 residues long: MLYHENFDVIVVGGGHAGTEAALASARTGQKTLLLTHNIDTLGQMSCNPAIGGIGKGHLVKEVDAMGGLMAEAIDHAGIQFRTLNASKGPAVRATRAQADRALYKAYVRNALENAPNLTLFQQSVDDLIVEQDRVVGVVTQMGLKFHAKAVVLTVGTFLGGKIHIGMESSSGGRAGDPPSIALADRLRELPFRVDRLKTGTPPRIDARTVDFSVLEAQHGDNPTPVFSFMGKREHHPRQIPCFITHTNEQTHEVIRNNLDRSPMYAGVIEGIGPRYCPSIEDKVMRFADKNSHQIFIEPEGLTTHELYPNGISTSLPFDVQVQIVRSMKGFENAHIVRPGYAIEYDFFDPRDLKQTYETKFISGLFFAGQINGTTGYEEAAAQGLMAGLNASLYSQGKEGWSPRRDQAYMGVLIDDLSTMGTKEPYRMFTSRAEYRLLLREDNADLRLTEKARELGLIDDVRWARFNEKIENMETERQRLKSTWVNPNSAGIDELNKLLKTPMAREASGEDLLRRPEISYSQLTQLDAFAPALEDQQAAEQVEIQVKYDGYIKRQQEEIEKSLRHEHTKLPADLDYKDVKGLSNEVVAKLSEAKPESIGIASRISGITPAAISILLVHLKKHGLLKKGEEE.

FAD contacts are provided by residues 13–18 (GGGHAG), V125, and S180. 273 to 287 (GPRYCPSIEDKVMRF) is a binding site for NAD(+). Q370 contributes to the FAD binding site.

The protein belongs to the MnmG family. As to quaternary structure, homodimer. Heterotetramer of two MnmE and two MnmG subunits. The cofactor is FAD.

It localises to the cytoplasm. NAD-binding protein involved in the addition of a carboxymethylaminomethyl (cmnm) group at the wobble position (U34) of certain tRNAs, forming tRNA-cmnm(5)s(2)U34. In Vibrio parahaemolyticus serotype O3:K6 (strain RIMD 2210633), this protein is tRNA uridine 5-carboxymethylaminomethyl modification enzyme MnmG.